Reading from the N-terminus, the 200-residue chain is Recombination protein RecR (200 aa).

The C4-type zinc-finger motif lies at 57–72 (CDSCQNFSDTEICQIC). Residues 80 to 175 (GTLCVVESPS…LITRLAHGIP (96 aa)) form the Toprim domain.

It belongs to the RecR family.

In terms of biological role, may play a role in DNA repair. It seems to be involved in an RecBC-independent recombinational process of DNA repair. It may act with RecF and RecO. In Marinobacter nauticus (strain ATCC 700491 / DSM 11845 / VT8) (Marinobacter aquaeolei), this protein is Recombination protein RecR.